Consider the following 527-residue polypeptide: Putative GTP-binding protein 6 (527 aa).

A Hflx-type G domain is found at 306 to 470; the sequence is PIISILGYTN…QVETAVMKST (165 aa). Residues 312 to 319, 338 to 342, 360 to 363, 429 to 432, and 448 to 450 each bind GTP; these read GYTNSGKT, FATLD, DTIG, NKID, and SAL. Residues Thr319 and Thr340 each coordinate Mg(2+).

It belongs to the TRAFAC class OBG-HflX-like GTPase superfamily. HflX GTPase family. Mg(2+) is required as a cofactor.

In Xenopus laevis (African clawed frog), this protein is Putative GTP-binding protein 6 (gtpbp6).